The chain runs to 329 residues: Sideroflexin (329 aa).

Helical transmembrane passes span Ala-95–Gly-115, Ile-147–Trp-167, Leu-183–Met-203, Phe-238–Phe-258, and Leu-274–Phe-294.

Belongs to the sideroflexin family.

It localises to the mitochondrion membrane. Functionally, mitochondrial amino-acid transporter that mediates transport of serine into mitochondria. This chain is Sideroflexin, found in Dictyostelium discoideum (Social amoeba).